We begin with the raw amino-acid sequence, 217 residues long: MRLRNKPWAVKLVNEHPESVLQNPDPEKKIDWAARFGNDNTIEIEVGSGKGHFITTLAENNPDKNYVALELQTTAAGIILRTKLEKGLDNLQILRGDAADINCFFPENSTNVIYLNFSDPWPKTRHEKRRLTYKSFLAKYQQVLTKDGHIEFKTDNSGLFAYSVQSMNNFGMHFDFVSVDLHHEKPEIVEKNIETEYEHKFAAKGNPIYALHADFEA.

S-adenosyl-L-methionine-binding residues include glutamate 45, glutamate 70, aspartate 97, and aspartate 119. Aspartate 119 is an active-site residue. Lysine 123 provides a ligand contact to substrate. Residues 125–130 (RHEKRR) are interaction with RNA. Residues aspartate 155 and 195–198 (TEYE) contribute to the substrate site.

It belongs to the class I-like SAM-binding methyltransferase superfamily. TrmB family.

The enzyme catalyses guanosine(46) in tRNA + S-adenosyl-L-methionine = N(7)-methylguanosine(46) in tRNA + S-adenosyl-L-homocysteine. It functions in the pathway tRNA modification; N(7)-methylguanine-tRNA biosynthesis. In terms of biological role, catalyzes the formation of N(7)-methylguanine at position 46 (m7G46) in tRNA. This chain is tRNA (guanine-N(7)-)-methyltransferase, found in Lactobacillus helveticus (strain DPC 4571).